The following is a 349-amino-acid chain: Anthranilate phosphoribosyltransferase (349 aa).

Residues Gly94, 97–98, Thr102, 104–107, 122–130, and Ser134 each bind 5-phospho-alpha-D-ribose 1-diphosphate; these read GD, NIST, and KHGNRSVSS. Gly94 contacts anthranilate. Ser106 lines the Mg(2+) pocket. Residue Asn125 coordinates anthranilate. Arg180 is an anthranilate binding site. Mg(2+) contacts are provided by Asp239 and Glu240.

It belongs to the anthranilate phosphoribosyltransferase family. In terms of assembly, homodimer. The cofactor is Mg(2+).

The enzyme catalyses N-(5-phospho-beta-D-ribosyl)anthranilate + diphosphate = 5-phospho-alpha-D-ribose 1-diphosphate + anthranilate. Its pathway is amino-acid biosynthesis; L-tryptophan biosynthesis; L-tryptophan from chorismate: step 2/5. Catalyzes the transfer of the phosphoribosyl group of 5-phosphorylribose-1-pyrophosphate (PRPP) to anthranilate to yield N-(5'-phosphoribosyl)-anthranilate (PRA). The chain is Anthranilate phosphoribosyltransferase from Trichlorobacter lovleyi (strain ATCC BAA-1151 / DSM 17278 / SZ) (Geobacter lovleyi).